A 466-amino-acid polypeptide reads, in one-letter code: ATP synthase subunit beta (466 aa).

155-162 is a binding site for ATP; the sequence is GGAGVGKT.

This sequence belongs to the ATPase alpha/beta chains family. As to quaternary structure, F-type ATPases have 2 components, CF(1) - the catalytic core - and CF(0) - the membrane proton channel. CF(1) has five subunits: alpha(3), beta(3), gamma(1), delta(1), epsilon(1). CF(0) has three main subunits: a(1), b(2) and c(9-12). The alpha and beta chains form an alternating ring which encloses part of the gamma chain. CF(1) is attached to CF(0) by a central stalk formed by the gamma and epsilon chains, while a peripheral stalk is formed by the delta and b chains.

It is found in the cell inner membrane. The enzyme catalyses ATP + H2O + 4 H(+)(in) = ADP + phosphate + 5 H(+)(out). Its function is as follows. Produces ATP from ADP in the presence of a proton gradient across the membrane. The catalytic sites are hosted primarily by the beta subunits. This chain is ATP synthase subunit beta, found in Bordetella petrii (strain ATCC BAA-461 / DSM 12804 / CCUG 43448).